Consider the following 285-residue polypeptide: Protein FD (285 aa).

Basic residues predominate over residues 1–12 (MLSSAKHQRNHR). Disordered stretches follow at residues 1–59 (MLSS…QKRS), 79–107 (NRHS…NSIF), 115–134 (LNQE…NGDS), 198–236 (SSSF…ARKQ), and 257–285 (KRQQ…TAPF). Polar residues predominate over residues 13-25 (LSATNKNQTLTKV). Residues 26 to 50 (SSISSSSPSSSSSSSSTSSSSPLPS) are compositionally biased toward low complexity. Residues 98–107 (HHNQNPNSIF) are compositionally biased toward polar residues. The bZIP domain occupies 214–277 (GNRRHKRMIK…AIQQPKKNTL (64 aa)). Residues 216-235 (RRHKRMIKNRESAARSRARK) form a basic motif region. The interval 242-263 (LELEVAHLQAENARLKRQQDQL) is leucine-zipper. Residues 272 to 285 (PKKNTLQRSSTAPF) show a composition bias toward polar residues. Threonine 282 carries the post-translational modification Phosphothreonine.

This sequence belongs to the bZIP family. As to quaternary structure, self-interacts. Interacts with FT and FDP/BZIP27. Interacts with GRF3 and GRF4, and in a calcium-independent manner, with CPK6 and CPK33. Post-translationally, phosphorylated at Thr-282 in a calcium-dependent manner by CPK6 and CPK33. As to expression, highly expressed in shoot apex.

The protein resides in the nucleus. Its function is as follows. Transcription factor required for the transition to flowering promoted by FT. In Arabidopsis thaliana (Mouse-ear cress), this protein is Protein FD.